We begin with the raw amino-acid sequence, 524 residues long: Cytochrome P450 1A1 (524 aa).

The segment at 33-44 (LRTQVPKGLKTP) is mitochondrial targeting signal. Residue serine 71 is glycosylated (O-linked (GlcNAc) serine). Phenylalanine 228 is a substrate binding site. Cysteine 461 is a binding site for heme.

Belongs to the cytochrome P450 family. As to quaternary structure, interacts with cytosolic chaperones HSP70 and HSP90; this interaction is required for initial targeting to mitochondria. Interacts (via mitochondrial targeting signal) with TOMM40 (via N-terminus); this interaction is required for translocation across the mitochondrial outer membrane. Requires heme as cofactor.

The protein resides in the endoplasmic reticulum membrane. The protein localises to the mitochondrion inner membrane. It localises to the microsome membrane. Its subcellular location is the cytoplasm. It catalyses the reaction an organic molecule + reduced [NADPH--hemoprotein reductase] + O2 = an alcohol + oxidized [NADPH--hemoprotein reductase] + H2O + H(+). The enzyme catalyses estrone + reduced [NADPH--hemoprotein reductase] + O2 = 2-hydroxyestrone + oxidized [NADPH--hemoprotein reductase] + H2O + H(+). It carries out the reaction estrone + reduced [NADPH--hemoprotein reductase] + O2 = 4-hydroxyestrone + oxidized [NADPH--hemoprotein reductase] + H2O + H(+). The catalysed reaction is estrone + reduced [NADPH--hemoprotein reductase] + O2 = 6alpha-hydroxyestrone + oxidized [NADPH--hemoprotein reductase] + H2O + H(+). It catalyses the reaction estrone + reduced [NADPH--hemoprotein reductase] + O2 = 15alpha-hydroxyestrone + oxidized [NADPH--hemoprotein reductase] + H2O + H(+). The enzyme catalyses estrone + reduced [NADPH--hemoprotein reductase] + O2 = 16alpha-hydroxyestrone + oxidized [NADPH--hemoprotein reductase] + H2O + H(+). It carries out the reaction 17beta-estradiol + reduced [NADPH--hemoprotein reductase] + O2 = 2-hydroxy-17beta-estradiol + oxidized [NADPH--hemoprotein reductase] + H2O + H(+). The catalysed reaction is 17beta-estradiol + reduced [NADPH--hemoprotein reductase] + O2 = 4-hydroxy-17beta-estradiol + oxidized [NADPH--hemoprotein reductase] + H2O + H(+). It catalyses the reaction 17beta-estradiol + reduced [NADPH--hemoprotein reductase] + O2 = 6alpha-hydroxy-17beta-estradiol + oxidized [NADPH--hemoprotein reductase] + H2O + H(+). The enzyme catalyses 17beta-estradiol + reduced [NADPH--hemoprotein reductase] + O2 = 7alpha-hydroxy-17beta-estradiol + oxidized [NADPH--hemoprotein reductase] + H2O + H(+). It carries out the reaction 17beta-estradiol + reduced [NADPH--hemoprotein reductase] + O2 = 15alpha-hydroxy-17beta-estradiol + oxidized [NADPH--hemoprotein reductase] + H2O + H(+). The catalysed reaction is (5Z,8Z,11Z)-eicosatrienoate + reduced [NADPH--hemoprotein reductase] + O2 = 19-hydroxy-(5Z,8Z,11Z)-eicosatrienoate + oxidized [NADPH--hemoprotein reductase] + H2O + H(+). It catalyses the reaction (5Z,8Z,11Z,14Z)-eicosatetraenoate + reduced [NADPH--hemoprotein reductase] + O2 = 16-hydroxy-(5Z,8Z,11Z,14Z)-eicosatetraenoate + oxidized [NADPH--hemoprotein reductase] + H2O + H(+). The enzyme catalyses (5Z,8Z,11Z,14Z)-eicosatetraenoate + reduced [NADPH--hemoprotein reductase] + O2 = 17-hydroxy-(5Z,8Z,11Z,14Z)-eicosatetraenoate + oxidized [NADPH--hemoprotein reductase] + H2O + H(+). It carries out the reaction (5Z,8Z,11Z,14Z)-eicosatetraenoate + reduced [NADPH--hemoprotein reductase] + O2 = 18-hydroxy-(5Z,8Z,11Z,14Z)-eicosatetraenoate + oxidized [NADPH--hemoprotein reductase] + H2O + H(+). The catalysed reaction is (5Z,8Z,11Z,14Z)-eicosatetraenoate + reduced [NADPH--hemoprotein reductase] + O2 = 19-hydroxy-(5Z,8Z,11Z,14Z)-eicosatetraenoate + oxidized [NADPH--hemoprotein reductase] + H2O + H(+). It catalyses the reaction (5Z,8Z,11Z,14Z,17Z)-eicosapentaenoate + reduced [NADPH--hemoprotein reductase] + O2 = 19-hydroxy-(5Z,8Z,11Z,14Z,17Z)-eicosapentaenoate + oxidized [NADPH--hemoprotein reductase] + H2O + H(+). The enzyme catalyses (5Z,8Z,11Z,14Z)-eicosatetraenoate + reduced [NADPH--hemoprotein reductase] + O2 = (8R,9S)-epoxy-(5Z,11Z,14Z)-eicosatrienoate + oxidized [NADPH--hemoprotein reductase] + H2O + H(+). It carries out the reaction (5Z,8Z,11Z,14Z)-eicosatetraenoate + reduced [NADPH--hemoprotein reductase] + O2 = (11R,12S)-epoxy-(5Z,8Z,14Z)-eicosatrienoate + oxidized [NADPH--hemoprotein reductase] + H2O + H(+). The catalysed reaction is (5Z,8Z,11Z,14Z)-eicosatetraenoate + reduced [NADPH--hemoprotein reductase] + O2 = (14S,15R)-epoxy-(5Z,8Z,11Z)-eicosatrienoate + oxidized [NADPH--hemoprotein reductase] + H2O + H(+). It catalyses the reaction (5Z,8Z,11Z,14Z)-eicosatetraenoate + reduced [NADPH--hemoprotein reductase] + O2 = (14R,15S)-epoxy-(5Z,8Z,11Z)-eicosatrienoate + oxidized [NADPH--hemoprotein reductase] + H2O + H(+). The enzyme catalyses (5Z,8Z,11Z,14Z,17Z)-eicosapentaenoate + reduced [NADPH--hemoprotein reductase] + O2 = (17R,18S)-epoxy-(5Z,8Z,11Z,14Z)-eicosatetraenoate + oxidized [NADPH--hemoprotein reductase] + H2O + H(+). It carries out the reaction (4Z,7Z,10Z,13Z,16Z,19Z)-docosahexaenoate + reduced [NADPH--hemoprotein reductase] + O2 = (19S,20R)-epoxy-(4Z,7Z,10Z,13Z,16Z)-docosapentaenoate + oxidized [NADPH--hemoprotein reductase] + H2O + H(+). The catalysed reaction is (4Z,7Z,10Z,13Z,16Z,19Z)-docosahexaenoate + reduced [NADPH--hemoprotein reductase] + O2 = (19R,20S)-epoxy-(4Z,7Z,10Z,13Z,16Z)-docosapentaenoate + oxidized [NADPH--hemoprotein reductase] + H2O + H(+). It catalyses the reaction all-trans-retinol + reduced [NADPH--hemoprotein reductase] + O2 = all-trans-retinal + oxidized [NADPH--hemoprotein reductase] + 2 H2O + H(+). The enzyme catalyses all-trans-retinal + reduced [NADPH--hemoprotein reductase] + O2 = all-trans-retinoate + oxidized [NADPH--hemoprotein reductase] + H2O + 2 H(+). It carries out the reaction (13S)-hydroperoxy-(9Z,11E)-octadecadienoate = 13-oxo-(9Z,11E)-octadecadienoate + H2O. The catalysed reaction is (12S)-hydroperoxy-(5Z,8Z,10E,14Z)-eicosatetraenoate = 12-oxo-(5Z,8Z,10E,14Z)-eicosatetraenoate + H2O. It catalyses the reaction (15S)-hydroperoxy-(5Z,8Z,11Z,13E)-eicosatetraenoate = 15-oxo-(5Z,8Z,11Z,13E)-eicosatetraenoate + H2O. The enzyme catalyses (5S)-hydroperoxy-(6E,8Z,11Z,14Z)-eicosatetraenoate = 5-oxo-(6E,8Z,11Z,14Z)-eicosatetraenoate + H2O. It participates in steroid hormone biosynthesis. It functions in the pathway lipid metabolism; fatty acid metabolism. The protein operates within cofactor metabolism; retinol metabolism. In terms of biological role, a cytochrome P450 monooxygenase involved in the metabolism of various endogenous substrates, including fatty acids, steroid hormones and vitamins. Mechanistically, uses molecular oxygen inserting one oxygen atom into a substrate, and reducing the second into a water molecule, with two electrons provided by NADPH via cytochrome P450 reductase (CPR; NADPH-ferrihemoprotein reductase). Catalyzes the hydroxylation of carbon-hydrogen bonds. Exhibits high catalytic activity for the formation of hydroxyestrogens from estrone (E1) and 17beta-estradiol (E2), namely 2-hydroxy E1 and E2, as well as D-ring hydroxylated E1 and E2 at the C15alpha and C16alpha positions. Displays different regioselectivities for polyunsaturated fatty acids (PUFA) hydroxylation. Catalyzes the epoxidation of double bonds of certain PUFA. Converts arachidonic acid toward epoxyeicosatrienoic acid (EET) regioisomers, 8,9-, 11,12-, and 14,15-EET, that function as lipid mediators in the vascular system. Displays an absolute stereoselectivity in the epoxidation of eicosapentaenoic acid (EPA) producing the 17(R),18(S) enantiomer. May play an important role in all-trans retinoic acid biosynthesis in extrahepatic tissues. Catalyzes two successive oxidative transformation of all-trans retinol to all-trans retinal and then to the active form all-trans retinoic acid. May also participate in eicosanoids metabolism by converting hydroperoxide species into oxo metabolites (lipoxygenase-like reaction, NADPH-independent). The protein is Cytochrome P450 1A1 (CYP1A1) of Mesocricetus auratus (Golden hamster).